The sequence spans 1819 residues: Non-reducing polyketide synthase nscA (1819 aa).

Positions 25–277 are N-terminal acylcarrier protein transacylase domain (SAT); it reads RRLDQHSKDR…PLPVYDGLCH (253 aa). The region spanning 413–846 is the Ketosynthase family 3 (KS3) domain; sequence SSKLAIVGMA…GGNTTLLLED (434 aa). Residues C586, H721, and H764 each act as for beta-ketoacyl synthase activity in the active site. The interval 952–1249 is malonyl-CoA:ACP transacylase (MAT) domain; sequence FTSQGAYYHG…MIPSAPAMSS (298 aa). Positions 1339-1658 are product template (PT) domain; it reads TSLVHQITAE…RLLMDRFFSP (320 aa). Residues 1343-1479 are N-terminal hotdog fold; sequence HQITAETVEA…AMIRFEDPMA (137 aa). The PKS/mFAS DH domain occupies 1343 to 1653; it reads HQITAETVEA…IRRVPRLLMD (311 aa). H1375 functions as the Proton acceptor; for dehydratase activity in the catalytic mechanism. Residues 1507 to 1653 are C-terminal hotdog fold; that stretch reads ASRLSKPLAY…IRRVPRLLMD (147 aa). D1564 functions as the Proton donor; for dehydratase activity in the catalytic mechanism. The interval 1703–1742 is disordered; the sequence is SSTMASKAPEPAPLLATSSESSTPKESPIVTPAESEREDP. Low complexity predominate over residues 1719–1730; the sequence is TSSESSTPKESP. The region spanning 1742 to 1819 is the Carrier domain; that stretch reads PVDNNMISQC…EMTAWIEEYC (78 aa). The residue at position 1779 (S1779) is an O-(pantetheine 4'-phosphoryl)serine.

The cofactor is pantetheine 4'-phosphate.

It participates in secondary metabolite biosynthesis. Functionally, non-reducing polyketide synthase; part of the gene cluster that mediates the biosynthesis of neosartoricin B, a prenylated anthracenone that probably exhibits T-cell antiproliferative activity, suggestive of a physiological role as an immunosuppressive agent. The non-reducing polyketide synthase nscA probably synthesizes and cyclizes the decaketide backbone. The hydrolase nscB then mediates the product release through hydrolysis followed by spontaneous decarboxylation. The prenyltransferase nscD catalyzes the addition of the dimethylallyl group to the aromatic C5. The FAD-dependent monooxygenase nscC is then responsible for the stereospecific hydroxylation at C2. Neosartoricin B can be converted into two additional compounds neosartoricins C and D. Neosartoricin C is a spirocyclic compound that is cyclized through the attack of C3 hydroxyl on C14, followed by dehydration. On the other hand, neosartoricin D is a further cyclized compound in which attack of C2 on C14 in neosartoricin C results in the formation of the acetal-containing dioxabicyclo-octanone ring. Both of these compounds are novel and possibly represent related metabolites of the gene cluster. This is Non-reducing polyketide synthase nscA from Trichophyton verrucosum (strain HKI 0517).